Reading from the N-terminus, the 1925-residue chain is Cilia- and flagella-associated protein 65 (1925 aa).

A helical transmembrane segment spans residues 188–208 (FFTVIPQPIFLSPGITLTLPI). The 110-residue stretch at 877–986 (QLKLDTHKSL…THYMLRLVGV (110 aa)) folds into the MSP domain. Residues 1525-1550 (SQQLMRQYHKELQEWKDEKVRQEVEF) adopt a coiled-coil conformation. Disordered regions lie at residues 1645-1667 (KRKA…WGPV) and 1736-1823 (SSWE…PESQ). Composition is skewed to basic and acidic residues over residues 1649-1661 (PREE…EKSP) and 1739-1762 (EDGK…KKEE). Over residues 1763–1804 (GEEEKGEEEEEELEEEEEEEEETEEEELGKEEIEEKEEERDE) the composition is skewed to acidic residues.

It belongs to the CFAP65 family. As to quaternary structure, interacts with CFAP47.

The protein localises to the cell projection. It localises to the cilium. Its subcellular location is the flagellum membrane. The protein resides in the cytoplasmic vesicle. It is found in the secretory vesicle. The protein localises to the acrosome membrane. It localises to the cytoplasm. In terms of biological role, plays a role in flagellar formation and sperm motility. This Homo sapiens (Human) protein is Cilia- and flagella-associated protein 65.